A 577-amino-acid chain; its full sequence is Arginine--tRNA ligase (577 aa).

The 'HIGH' region motif lies at 122–132 (PNVAKEMHVGH).

This sequence belongs to the class-I aminoacyl-tRNA synthetase family. As to quaternary structure, monomer.

It is found in the cytoplasm. The enzyme catalyses tRNA(Arg) + L-arginine + ATP = L-arginyl-tRNA(Arg) + AMP + diphosphate. This Escherichia coli O157:H7 (strain EC4115 / EHEC) protein is Arginine--tRNA ligase.